A 747-amino-acid chain; its full sequence is Catalase-peroxidase 1 (747 aa).

Residues 1–22 are compositionally biased toward basic and acidic residues; it reads MTDTSDARPPHSDDKTRSHSES. Residues 1–39 form a disordered region; the sequence is MTDTSDARPPHSDDKTRSHSESENPAIDSPEPKVHAPLT. Residues 112–240 constitute a cross-link (tryptophyl-tyrosyl-methioninium (Trp-Tyr) (with M-266)); sequence WHAAGTYRIF…FGATTMGLIY (129 aa). His113 (proton acceptor) is an active-site residue. Positions 240 to 266 form a cross-link, tryptophyl-tyrosyl-methioninium (Tyr-Met) (with W-112); sequence YVNPEGPEGKPDPLAAAHDIRETFGRM. His281 provides a ligand contact to heme b.

It belongs to the peroxidase family. Peroxidase/catalase subfamily. Homodimer or homotetramer. The cofactor is heme b. Formation of the three residue Trp-Tyr-Met cross-link is important for the catalase, but not the peroxidase activity of the enzyme.

The catalysed reaction is H2O2 + AH2 = A + 2 H2O. It carries out the reaction 2 H2O2 = O2 + 2 H2O. Functionally, bifunctional enzyme with both catalase and broad-spectrum peroxidase activity. This is Catalase-peroxidase 1 from Mycolicibacterium vanbaalenii (strain DSM 7251 / JCM 13017 / BCRC 16820 / KCTC 9966 / NRRL B-24157 / PYR-1) (Mycobacterium vanbaalenii).